We begin with the raw amino-acid sequence, 277 residues long: Ribosome-inactivating protein luffin-alpha (277 aa).

The signal sequence occupies residues 1-19 (MKRFTVLILAIFVAASTVE). Residue E179 is part of the active site.

Belongs to the ribosome-inactivating protein family. Type 1 RIP subfamily.

The catalysed reaction is Endohydrolysis of the N-glycosidic bond at one specific adenosine on the 28S rRNA.. The protein is Ribosome-inactivating protein luffin-alpha of Luffa aegyptiaca (Sponge gourd).